A 322-amino-acid chain; its full sequence is Ferredoxin--NADP reductase (322 aa).

Aspartate 33, glutamine 41, tyrosine 46, alanine 86, phenylalanine 120, aspartate 278, and serine 319 together coordinate FAD.

The protein belongs to the ferredoxin--NADP reductase type 2 family. In terms of assembly, homodimer. The cofactor is FAD.

It carries out the reaction 2 reduced [2Fe-2S]-[ferredoxin] + NADP(+) + H(+) = 2 oxidized [2Fe-2S]-[ferredoxin] + NADPH. This Salinispora tropica (strain ATCC BAA-916 / DSM 44818 / JCM 13857 / NBRC 105044 / CNB-440) protein is Ferredoxin--NADP reductase.